The chain runs to 407 residues: Inhibin beta B chain (407 aa).

The signal sequence occupies residues 1 to 28 (MDGLPGRALGAACLLLLAAGWLGPEAWG). Positions 26-62 (AWGSPTPPPTPAAPPPPPPPGSPGGSQDTCTSCGGFR) are disordered. Positions 29–292 (SPTPPPTPAA…GDSRHRIRKR (264 aa)) are excised as a propeptide. Over residues 30–47 (PTPPPTPAAPPPPPPPGS) the composition is skewed to pro residues. Asparagine 93 carries an N-linked (GlcNAc...) asparagine glycan. Disulfide bonds link cysteine 296–cysteine 304, cysteine 303–cysteine 372, cysteine 332–cysteine 404, and cysteine 336–cysteine 406.

It belongs to the TGF-beta family. As to quaternary structure, dimeric, linked by one or more disulfide bonds. Inhibin B is a dimer of alpha and beta-B. Activin B is a homodimer of beta-B. Activin AB is a dimer of beta-A and beta-B. Interacts with FST and FSTL3. Activin B interacts with BMPR2.

The protein localises to the secreted. In terms of biological role, inhibins and activins inhibit and activate, respectively, the secretion of follitropin by the pituitary gland. Inhibins/activins are involved in regulating a number of diverse functions such as hypothalamic and pituitary hormone secretion, gonadal hormone secretion, germ cell development and maturation, erythroid differentiation, insulin secretion, nerve cell survival, embryonic axial development or bone growth, depending on their subunit composition. Inhibins appear to oppose the functions of activins. Its function is as follows. Activin B is a dimer of alpha and beta-B that plays a role in several essential biological processes including embryonic development, stem cell maintenance and differentiation, haematopoiesis, cell proliferation and wound healing. Signals through type I receptor ACVR1C, abundantly expressed in pancreatic beta cells, and type II receptors like ACVR2A or BMPR2. Upon ligand binding, these receptors phosphorylate intracellular signaling mediators SMAD2 and SMAD3, which form a complex with SMAD4, translocate to the nucleus, and regulate gene expression. Plays a crucial role in the induction of hepcidin by inflammation through activation of ACVR1C and subsequent phosphorylation of SMAD1/5/8. Regulates adipocyte lipid metabolism by decreasing non-esterified fatty acids and glycerol release and increases intracellular triglyceride content. Stimulates wound healing by promoting cell migration and hair follicle regeneration through the JNK and ERK signaling pathways downstream of RHOA. Functionally, inhibin B is a dimer of alpha and beta-B that plays a crucial role in the regulation of the reproductive system by inhibiting the secretion of follicle-stimulating hormone (FSH) from the anterior pituitary gland. Thereby, maintains reproductive homeostasis in both males and females. Acts as a more potent suppressor of FSH release than inhibin A. Functions as competitive receptor antagonist binding activin type II receptors with high affinity in the presence of the TGF-beta type III coreceptor/TGFBR3L. This Homo sapiens (Human) protein is Inhibin beta B chain (INHBB).